The following is a 276-amino-acid chain: Small ribosomal subunit protein uS3 (276 aa).

The 72-residue stretch at 39-110 (IRRETMKFLK…KINIKIKEIK (72 aa)) folds into the KH type-2 domain.

Belongs to the universal ribosomal protein uS3 family. In terms of assembly, part of the 30S ribosomal subunit. Forms a tight complex with proteins S10 and S14.

Its function is as follows. Binds the lower part of the 30S subunit head. Binds mRNA in the 70S ribosome, positioning it for translation. This Borrelia recurrentis (strain A1) protein is Small ribosomal subunit protein uS3.